We begin with the raw amino-acid sequence, 154 residues long: Ribonuclease H (154 aa).

Positions 5–146 (EQNIVYLYCD…ADELANRGID (142 aa)) constitute an RNase H type-1 domain. Residues aspartate 14, glutamate 52, aspartate 74, and aspartate 138 each coordinate Mg(2+).

This sequence belongs to the RNase H family. In terms of assembly, monomer. It depends on Mg(2+) as a cofactor.

Its subcellular location is the cytoplasm. The enzyme catalyses Endonucleolytic cleavage to 5'-phosphomonoester.. Endonuclease that specifically degrades the RNA of RNA-DNA hybrids. The protein is Ribonuclease H of Coxiella burnetii (strain CbuK_Q154) (Coxiella burnetii (strain Q154)).